Reading from the N-terminus, the 69-residue chain is DNA-directed RNA polymerase subunit epsilon (69 aa).

This sequence belongs to the RNA polymerase subunit epsilon family. In terms of assembly, RNAP is composed of a core of 2 alpha, a beta and a beta' subunit. The core is associated with a delta subunit, and at least one of epsilon or omega. When a sigma factor is associated with the core the holoenzyme is formed, which can initiate transcription.

The catalysed reaction is RNA(n) + a ribonucleoside 5'-triphosphate = RNA(n+1) + diphosphate. Its function is as follows. A non-essential component of RNA polymerase (RNAP). The sequence is that of DNA-directed RNA polymerase subunit epsilon from Listeria monocytogenes serotype 4b (strain CLIP80459).